The sequence spans 189 residues: Development-specific protein LVN1.2 (189 aa).

Endoderm cells.

This is Development-specific protein LVN1.2 from Lytechinus variegatus (Green sea urchin).